Reading from the N-terminus, the 432-residue chain is N-acylneuraminate cytidylyltransferase (432 aa).

An N-acetylmethionine modification is found at Met-1. Residues 1–38 (MDALEKGAVTSGPAPRGRPSRGRPPKLQRSRGAGRGLE) form a disordered region. Positions 15 to 31 (PRGRPSRGRPPKLQRSR) match the BC1 motif motif. Basic residues predominate over residues 18–29 (RPSRGRPPKLQR). Omega-N-methylarginine occurs at positions 35 and 50. Substrate-binding residues include Arg-50, Asn-60, Arg-109, Ser-118, Ser-120, and Gln-141. Residues 198 to 204 (KRPRRQD) carry the BC2 motif motif. Arg-199 is a catalytic residue. The BC3 motif signature appears at 267-274 (KEKLKEIK).

Belongs to the CMP-NeuNAc synthase family. In terms of assembly, homotetramer; the active enzyme is formed by a dimer of dimers. Highly expressed in brain and heart, and at intermediate level muscle and liver.

Its subcellular location is the nucleus. The catalysed reaction is an N-acylneuraminate + CTP = a CMP-N-acyl-beta-neuraminate + diphosphate. It functions in the pathway amino-sugar metabolism; N-acetylneuraminate metabolism. In terms of biological role, catalyzes the activation of N-acetylneuraminic acid (NeuNAc) to cytidine 5'-monophosphate N-acetylneuraminic acid (CMP-NeuNAc), a substrate required for the addition of sialic acid. Has some activity toward NeuNAc, N-glycolylneuraminic acid (Neu5Gc) or 2-keto-3-deoxy-D-glycero-D-galacto-nononic acid (KDN). The polypeptide is N-acylneuraminate cytidylyltransferase (Cmas) (Mus musculus (Mouse)).